The chain runs to 2907 residues: Fibrillin-2 (2907 aa).

The N-terminal stretch at 1-28 (MGRRRRLCLQPYFVWLGCVALWAQGTDG) is a signal peptide. Residues 26-58 (TDGQPQPPPPKTLRPQPPPQQVRPAVAGSEGGF) form a disordered region. The propeptide occupies 29-77 (QPQPPPPKTLRPQPPPQQVRPAVAGSEGGFMGPEYRDEGAVAASRVRRR). Residues 30–46 (PQPPPPKTLRPQPPPQQ) show a composition bias toward pro residues. 3 consecutive EGF-like domains span residues 111 to 142 (IVPI…PTCG), 145 to 176 (SIQQ…TYCG), and 176 to 208 (GQPV…PQCE). Intrachain disulfides connect cysteine 115–cysteine 124, cysteine 119–cysteine 130, cysteine 132–cysteine 141, cysteine 149–cysteine 159, cysteine 153–cysteine 164, cysteine 166–cysteine 175, cysteine 180–cysteine 190, cysteine 184–cysteine 196, and cysteine 198–cysteine 207. The tract at residues 149 to 359 (CSVRCMNGGT…VTSTDGSRCI (211 aa)) is interaction with MFAP4. The TB 1 domain occupies 214–266 (GPCFTQVNNQMCQGQLTGIVCTKTLCCATIGRAWGHPCEMCPAQPQPCRRGFI). An EGF-like 4; calcium-binding domain is found at 276-317 (DVDECQAIPGLCQGGNCINTVGSFECRCPAGHKQSETTQKCE). Disulfide bonds link cysteine 280-cysteine 292, cysteine 287-cysteine 301, cysteine 303-cysteine 316, cysteine 322-cysteine 334, cysteine 329-cysteine 343, and cysteine 345-cysteine 358. O-linked (Glc) serine glycosylation is present at serine 298. The 42-residue stretch at 318 to 359 (DIDECSVIPGVCETGDCSNTVGSYFCLCPRGFVTSTDGSRCI) folds into the EGF-like 5; calcium-binding domain. O-linked (Glc) serine glycosylation occurs at serine 340. In terms of domain architecture, TB 2 spans 364–417 (GTCFSGLVNGRCAQELPGRMAKAQCCCEPGRCWSIGTIPEACPVRGSEEYRRLC). A glycan (N-linked (GlcNAc...) asparagine) is linked at asparagine 485. In terms of domain architecture, EGF-like 6 spans 487 to 527 (TIDICKHHANLCLNGRCIPTVSSYRCECNMGYKQDANGDCI). 15 disulfide bridges follow: cysteine 491/cysteine 503, cysteine 498/cysteine 512, cysteine 514/cysteine 526, cysteine 532/cysteine 542, cysteine 537/cysteine 551, cysteine 553/cysteine 566, cysteine 572/cysteine 584, cysteine 579/cysteine 593, cysteine 595/cysteine 608, cysteine 614/cysteine 625, cysteine 620/cysteine 634, cysteine 636/cysteine 649, cysteine 655/cysteine 666, cysteine 661/cysteine 675, and cysteine 677/cysteine 690. O-linked (Glc) serine glycosylation occurs at serine 509. The region spanning 528–567 (DVDECTSNPCSNGDCVNTPGSYYCKCHAGFQRTPTKQACI) is the EGF-like 7; calcium-binding domain. A glycan (O-linked (Glc) serine) is linked at serine 548. The 42-residue stretch at 568–609 (DIDECIQNGVLCKNGRCVNTDGSFQCICNAGFELTTDGKNCV) folds into the EGF-like 8; calcium-binding domain. O-linked (Glc) serine glycosylation is present at serine 590. In terms of domain architecture, EGF-like 9; calcium-binding spans 610-650 (DHDECTTTNMCLNGMCINEDGSFKCVCKPGFILAPNGRYCT). Serine 631 is a glycosylation site (O-linked (Glc) serine). One can recognise an EGF-like 10; calcium-binding domain in the interval 651–691 (DVDECQTPGICMNGHCINNEGSFRCDCPPGLAVGVDGRVCV). Serine 672 carries O-linked (Glc) serine glycosylation. The TB 3 domain maps to 697–749 (STCYGEIKKGVCVRPFPGAVTKSECCCANPDYGFGEPCQPCPAKNSAEFHGLC). The 42-residue stretch at 761–802 (DINECALDPDICANGICENLRGSYRCNCNSGYEPDASGRNCI) folds into the EGF-like 11; calcium-binding domain. 9 disulfides stabilise this stretch: cysteine 765-cysteine 777, cysteine 772-cysteine 786, cysteine 788-cysteine 801, cysteine 807-cysteine 819, cysteine 814-cysteine 828, cysteine 830-cysteine 843, cysteine 849-cysteine 859, cysteine 854-cysteine 868, and cysteine 870-cysteine 883. Residues 803–844 (DIDECLVNRLLCDNGLCRNTPGSYSCTCPPGYVFRTETETCE) enclose the EGF-like 12; calcium-binding domain. O-linked (Glc) serine glycosylation occurs at serine 825. One can recognise an EGF-like 13; calcium-binding domain in the interval 845-883 (DVNECESNPCVNGACRNNLGSFHCECSPGSKLSSTGLIC). O-linked (Glc) serine glycosylation occurs at serine 865. A TB 4 domain is found at 889 to 940 (GTCWLNIQDNRCEVNINGATLKSECCATLGAAWGSPCERCELDAACPRGFAR). In terms of domain architecture, EGF-like 14; calcium-binding spans 948–989 (DVNECEVFPGVCPNGRCVNSKGSFHCECPEGLTLDGTGRVCL). Disulfide bonds link cysteine 952–cysteine 964, cysteine 959–cysteine 973, and cysteine 975–cysteine 988. The O-linked (Glc) serine glycan is linked to serine 970. One can recognise a TB 5 domain in the interval 994 to 1045 (EHCFLKWDEDECIHPVPGKFRMDACCCAVGAAWGTECEECPKPGTKEYETLC). One can recognise an EGF-like 15; calcium-binding domain in the interval 1066–1107 (DINECKAFPGMCTYGKCRNTIGSFKCRCNNGFALDMEERNCT). 36 cysteine pairs are disulfide-bonded: cysteine 1070-cysteine 1082, cysteine 1077-cysteine 1091, cysteine 1093-cysteine 1106, cysteine 1112-cysteine 1124, cysteine 1119-cysteine 1133, cysteine 1135-cysteine 1149, cysteine 1155-cysteine 1167, cysteine 1162-cysteine 1176, cysteine 1178-cysteine 1191, cysteine 1197-cysteine 1209, cysteine 1204-cysteine 1218, cysteine 1220-cysteine 1233, cysteine 1239-cysteine 1250, cysteine 1246-cysteine 1259, cysteine 1261-cysteine 1274, cysteine 1280-cysteine 1292, cysteine 1287-cysteine 1301, cysteine 1303-cysteine 1316, cysteine 1322-cysteine 1334, cysteine 1329-cysteine 1343, cysteine 1345-cysteine 1358, cysteine 1364-cysteine 1377, cysteine 1371-cysteine 1386, cysteine 1388-cysteine 1399, cysteine 1405-cysteine 1418, cysteine 1412-cysteine 1427, cysteine 1429-cysteine 1440, cysteine 1446-cysteine 1458, cysteine 1453-cysteine 1467, cysteine 1469-cysteine 1482, cysteine 1488-cysteine 1499, cysteine 1494-cysteine 1508, cysteine 1510-cysteine 1523, cysteine 1529-cysteine 1540, cysteine 1535-cysteine 1549, and cysteine 1551-cysteine 1564. O-linked (Glc) serine glycosylation occurs at serine 1088. Asparagine 1105 is a glycosylation site (N-linked (GlcNAc...) asparagine). In terms of domain architecture, EGF-like 16; calcium-binding spans 1108–1150 (DIDECRISPDLCGSGICVNTPGSFECECFEGYESGFMMMKNCM). The region spanning 1151–1192 (DIDECERNPLLCRGGTCVNTEGSFQCDCPLGHELSPSREDCV) is the EGF-like 17; calcium-binding domain. The O-linked (Glc) serine glycan is linked to serine 1173. Residues 1193 to 1234 (DINECSLSDNLCRNGKCVNMIGTYQCSCNPGYQATPDRQGCT) enclose the EGF-like 18; calcium-binding domain. A glycan (O-linked (Glc) threonine) is linked at threonine 1215. Residues 1235 to 1275 (DIDECMIMNGGCDTQCTNSEGSYECSCSEGYALMPDGRSCA) form the EGF-like 19; calcium-binding domain. Serine 1256 is a glycosylation site (O-linked (Glc) serine). In terms of domain architecture, EGF-like 20; calcium-binding spans 1276 to 1317 (DIDECENNPDICDGGQCTNIPGEYRCLCYDGFMASMDMKTCI). The EGF-like 21; calcium-binding domain maps to 1318 to 1359 (DVNECDLNPNICMFGECENTKGSFICHCQLGYSVKKGTTGCT). Serine 1340 carries O-linked (Glc) serine glycosylation. Residues 1360–1400 (DVDECEIGAHNCDMHASCLNVPGSFKCSCREGWVGNGIKCI) form the EGF-like 22; calcium-binding domain. Residue serine 1383 is glycosylated (O-linked (Glc) serine). The 41-residue stretch at 1401-1441 (DLDECANGTHQCSINAQCVNTPGSYRCACSEGFTGDGFTCS) folds into the EGF-like 23; calcium-binding domain. N-linked (GlcNAc...) asparagine glycosylation is present at asparagine 1407. Residues 1442–1483 (DVDECAENTNLCENGQCLNVPGAYRCECEMGFTPASDSRSCQ) enclose the EGF-like 24; calcium-binding domain. The EGF-like 25; calcium-binding domain occupies 1484–1524 (DIDECSFQNICVFGTCNNLPGMFHCICDDGYELDRTGGNCT). The N-linked (GlcNAc...) asparagine glycan is linked to asparagine 1522. One can recognise an EGF-like 26; calcium-binding domain in the interval 1525 to 1565 (DIDECADPINCVNGLCVNTPGRYECNCPPDFQLNPTGVGCV). Positions 1570–1626 (GNCYLKFGPRGDGSLSCNTEVGVGVSRSSCCCSLGKAWGNPCETCPPVNSTEYYTLC) constitute a TB 6 domain. Residue asparagine 1618 is glycosylated (N-linked (GlcNAc...) asparagine). Positions 1643 to 1684 (DIDECQELPGLCQGGNCINTFGSFQCECPQGYYLSEETRICE) constitute an EGF-like 27; calcium-binding domain. 6 disulfide bridges follow: cysteine 1647-cysteine 1659, cysteine 1654-cysteine 1668, cysteine 1670-cysteine 1683, cysteine 1689-cysteine 1701, cysteine 1696-cysteine 1710, and cysteine 1712-cysteine 1725. Serine 1665 carries an O-linked (Glc) serine glycan. The EGF-like 28; calcium-binding domain occupies 1685–1726 (DIDECFAHPGVCGPGTCYNTLGNYTCICPPEYMQVNGGHNCM). Asparagine 1707 is a glycosylation site (N-linked (GlcNAc...) asparagine). Residues 1728–2164 (MRKSFCYRSY…VPSLHDTRED (437 aa)) form an interaction with MFAP4 region. The TB 7 domain maps to 1731–1784 (SFCYRSYNGTTCENELPFNVTKRMCCCTYNVGKAWNKPCEPCPTPGTADFKTIC). N-linked (GlcNAc...) asparagine glycosylation is found at asparagine 1738 and asparagine 1749. One can recognise an EGF-like 29; calcium-binding domain in the interval 1801–1842 (DIDECKEIPGICANGVCINQIGSFRCECPTGFSYNDLLLVCE). 21 cysteine pairs are disulfide-bonded: cysteine 1805–cysteine 1817, cysteine 1812–cysteine 1826, cysteine 1828–cysteine 1841, cysteine 1847–cysteine 1860, cysteine 1854–cysteine 1869, cysteine 1871–cysteine 1883, cysteine 1889–cysteine 1901, cysteine 1896–cysteine 1910, cysteine 1912–cysteine 1925, cysteine 1931–cysteine 1941, cysteine 1936–cysteine 1950, cysteine 1952–cysteine 1964, cysteine 1970–cysteine 1983, cysteine 1978–cysteine 1992, cysteine 1994–cysteine 2007, cysteine 2013–cysteine 2025, cysteine 2020–cysteine 2034, cysteine 2036–cysteine 2047, cysteine 2053–cysteine 2065, cysteine 2060–cysteine 2074, and cysteine 2076–cysteine 2089. Residues 1843–1884 (DIDECSNGDNLCQRNADCINSPGSYRCECAAGFKLSPNGACV) enclose the EGF-like 30; calcium-binding domain. O-linked (Glc) serine glycosylation occurs at serine 1866. One can recognise an EGF-like 31; calcium-binding domain in the interval 1885–1926 (DRNECLEIPNVCSHGLCVDLQGSYQCICNNGFKASQDQTMCM). An EGF-like 32; calcium-binding domain is found at 1927–1965 (DVDECERHPCGNGTCKNTVGSYNCLCYPGFELTHNNDCL). The N-linked (GlcNAc...) asparagine glycan is linked to asparagine 1938. An O-linked (Glc) serine glycan is attached at serine 1947. One can recognise an EGF-like 33; calcium-binding domain in the interval 1966–2008 (DIDECSSFFGQVCRNGRCFNEIGSFKCLCNEGYELTPDGKNCI). Residue serine 1989 is glycosylated (O-linked (Glc) serine). In terms of domain architecture, EGF-like 34; calcium-binding spans 2009–2048 (DTNECVALPGSCSPGTCQNLEGSFRCICPPGYEVRSENCI). Residues 2049 to 2090 (DINECDEDPNICLFGSCTNTPGGFQCICPPGFVLSDNGRRCF) form the EGF-like 35; calcium-binding domain. The TB 8 domain maps to 2095 to 2148 (SFCFTNFENGKCSVPKAFNTTKAKCCCSKMPGEGWGDPCELCPKDDEVAFQDLC). Asparagine 2113 carries an N-linked (GlcNAc...) asparagine glycan. The region spanning 2164–2205 (DVNECLESPGICSNGQCINTDGSFRCECPMGYNLDYTGVRCV) is the EGF-like 36; calcium-binding domain. Cystine bridges form between cysteine 2168–cysteine 2180, cysteine 2175–cysteine 2189, cysteine 2191–cysteine 2204, cysteine 2210–cysteine 2221, cysteine 2216–cysteine 2230, cysteine 2232–cysteine 2244, cysteine 2250–cysteine 2261, cysteine 2257–cysteine 2270, cysteine 2272–cysteine 2285, cysteine 2291–cysteine 2305, cysteine 2298–cysteine 2314, cysteine 2316–cysteine 2329, cysteine 2335–cysteine 2347, cysteine 2342–cysteine 2356, and cysteine 2358–cysteine 2371. A glycan (O-linked (Glc) serine) is linked at serine 2186. The EGF-like 37; calcium-binding domain occupies 2206–2245 (DTDECSIGNPCGNGTCTNVIGSFECTCNEGFEPGPMMNCE). Asparagine 2218 carries N-linked (GlcNAc...) asparagine glycosylation. An EGF-like 38; calcium-binding domain is found at 2246–2286 (DINECAQNPLLCAFRCMNTFGSYECTCPVGYALREDQKMCK). The O-linked (Glc) serine glycan is linked to serine 2267. The EGF-like 39; calcium-binding domain occupies 2287–2330 (DLDECAEGLHDCESRGMMCKNLIGTFMCICPPGMARRPDGEGCV). An EGF-like 40; calcium-binding domain is found at 2331 to 2372 (DENECRTKPGICENGRCVNIIGSYRCECNEGFQSSSSGTECL). The O-linked (Glc) serine glycan is linked to serine 2353. The 54-residue stretch at 2377–2430 (GLCFAEVLQTMCQMASSSRNLVTKSECCCDGGRGWGHQCELCPLPGTAQYKKIC) folds into the TB 9 domain. The region spanning 2442–2483 (DIDECKVMPSLCTNGQCVNTMGSFRCFCKVGYTTDISGTACV) is the EGF-like 41; calcium-binding domain. Disulfide bonds link cysteine 2446–cysteine 2458, cysteine 2453–cysteine 2467, cysteine 2469–cysteine 2482, cysteine 2488–cysteine 2499, cysteine 2495–cysteine 2508, cysteine 2510–cysteine 2523, cysteine 2529–cysteine 2540, cysteine 2536–cysteine 2549, cysteine 2551–cysteine 2562, cysteine 2568–cysteine 2581, cysteine 2575–cysteine 2590, cysteine 2592–cysteine 2605, cysteine 2611–cysteine 2621, cysteine 2617–cysteine 2630, cysteine 2632–cysteine 2645, cysteine 2651–cysteine 2662, cysteine 2657–cysteine 2671, cysteine 2673–cysteine 2686, cysteine 2692–cysteine 2703, cysteine 2699–cysteine 2712, and cysteine 2714–cysteine 2726. An O-linked (Glc) serine glycan is attached at serine 2464. Residues 2484 to 2524 (DLDECSQSPKPCNFICKNTKGSYQCSCPRGYVLQEDGKTCK) form the EGF-like 42; calcium-binding domain. Serine 2505 carries O-linked (Glc) serine glycosylation. Residues 2525-2563 (DLDECQTKQHNCQFLCVNTLGGFTCKCPPGFTQHHTACI) form the EGF-like 43; calcium-binding domain. The region spanning 2564–2606 (DNNECGSQPSLCGAKGICQNTPGSFSCECQRGFSLDASGLNCE) is the EGF-like 44; calcium-binding domain. O-linked (Glc) serine glycosylation is present at serine 2587. One can recognise an EGF-like 45; calcium-binding domain in the interval 2607–2646 (DVDECDGNHRCQHGCQNILGGYRCGCPQGYVQHYQWNQCV). An EGF-like 46; calcium-binding domain is found at 2647-2687 (DENECSNPGACGSASCYNTLGSYKCACPSGFSFDQFSSACH). O-linked (Glc) serine glycosylation is present at serine 2668. The 40-residue stretch at 2688–2727 (DVNECSSSKNPCSYGCSNTEGGYLCGCPPGYFRVGQGHCV) folds into the EGF-like 47; calcium-binding domain. Asparagine 2803 carries N-linked (GlcNAc...) asparagine glycosylation.

Belongs to the fibrillin family. As to quaternary structure, interacts with BMP2, BMP4, BMP7, BMP10 and GDF5. Interacts with MFAP2 and MFAP5. Interacts with ADAMTSL5. Interacts with MFAP4. In terms of processing, N-glycosylated. Post-translationally, O-glycosylated on serine residues by POGLUT2 and POGLUT3. In terms of tissue distribution, widely expressed.

It localises to the secreted. Its subcellular location is the extracellular space. It is found in the extracellular matrix. Functionally, fibrillins are structural components of 10-12 nm extracellular calcium-binding microfibrils, which occur either in association with elastin or in elastin-free bundles. Fibrillin-2-containing microfibrils regulate the early process of elastic fiber assembly. Regulates osteoblast maturation by controlling TGF-beta bioavailability and calibrating TGF-beta and BMP levels, respectively. Hormone secreted by trophoblasts that promotes trophoblast invasiveness. Has glucogenic activity: is able to increase plasma glucose levels. This Mus musculus (Mouse) protein is Fibrillin-2.